The chain runs to 145 residues: Neutral phospholipase A2 homolog taipoxin beta chain 1 (145 aa).

A signal peptide spans 1–27; sequence MHPAHLLVLLAVCVSLLGASDIPPLPL. Cystine bridges form between C38–C98, C54–C144, C56–C72, C71–C125, C78–C118, C87–C111, and C105–C116.

Belongs to the phospholipase A2 family. Group I subfamily. D49 sub-subfamily. As to quaternary structure, heterotrimer of alpha, beta, and gamma chains; non-covalently linked. As to expression, expressed by the venom gland.

It localises to the secreted. Heterotrimer: Snake venom phospholipase A2 (PLA2) heterotrimer that acts as a potent presynaptic neurotoxin by blocking synaptic transmission and synaptic vesicle recycling. May act by binding in a calcium-dependent fashion to neurotonal pentraxin-1 (NPTX1) and neurotonal pentraxin-2 (NPTX2), but not to neuronal pentraxin receptor (NPTXR). Also binds to taipoxin-associated calcium binding protein 49 (RCN2), a protein localized in the lumen of endoplasmic reticulum. In terms of biological role, monomer (beta chain): Snake venom phospholipase A2 homolog that is neither toxic nor enzymatically active. Does not bind calcium. In Oxyuranus scutellatus scutellatus (Australian taipan), this protein is Neutral phospholipase A2 homolog taipoxin beta chain 1.